A 301-amino-acid chain; its full sequence is Glycine--tRNA ligase alpha subunit (301 aa).

It belongs to the class-II aminoacyl-tRNA synthetase family. In terms of assembly, tetramer of two alpha and two beta subunits.

It localises to the cytoplasm. It catalyses the reaction tRNA(Gly) + glycine + ATP = glycyl-tRNA(Gly) + AMP + diphosphate. This chain is Glycine--tRNA ligase alpha subunit, found in Shewanella piezotolerans (strain WP3 / JCM 13877).